The primary structure comprises 212 residues: Thymidylate kinase (212 aa).

10–17 (GLEGAGKT) serves as a coordination point for ATP.

Belongs to the thymidylate kinase family.

The catalysed reaction is dTMP + ATP = dTDP + ADP. Functionally, phosphorylation of dTMP to form dTDP in both de novo and salvage pathways of dTTP synthesis. This chain is Thymidylate kinase, found in Yersinia enterocolitica serotype O:8 / biotype 1B (strain NCTC 13174 / 8081).